A 319-amino-acid chain; its full sequence is ATP-dependent 6-phosphofructokinase (319 aa).

G11 lines the ATP pocket. 21–25 (RAVVR) contributes to the ADP binding site. Residues 72-73 (RC) and 102-105 (GDGS) contribute to the ATP site. Mg(2+) is bound at residue D103. Position 125–127 (125–127 (TID)) interacts with substrate. Residue D127 is the Proton acceptor of the active site. R154 is a binding site for ADP. Residues R162 and 169 to 171 (MGR) each bind substrate. ADP-binding positions include 185-187 (GAE), R211, and 213-215 (KKH). Substrate contacts are provided by residues E222, R243, and 249–252 (HIQR).

This sequence belongs to the phosphofructokinase type A (PFKA) family. ATP-dependent PFK group I subfamily. Prokaryotic clade 'B1' sub-subfamily. Homotetramer. Component of a possible RNA degradosome complex composed of rny, rnjA, rnjB, pnp, pfkA and eno (although rnjA and rnjB's presence is unclear). Specifically interacts with RNase Y (rny, PubMed:21803996) and enolase (eno, PubMed:22198292). Interacts with BrxC. Mg(2+) serves as cofactor.

The protein resides in the cytoplasm. The catalysed reaction is beta-D-fructose 6-phosphate + ATP = beta-D-fructose 1,6-bisphosphate + ADP + H(+). It functions in the pathway carbohydrate degradation; glycolysis; D-glyceraldehyde 3-phosphate and glycerone phosphate from D-glucose: step 3/4. With respect to regulation, allosterically activated by ADP and other diphosphonucleosides, and allosterically inhibited by phosphoenolpyruvate. Its function is as follows. Catalyzes the phosphorylation of D-fructose 6-phosphate to fructose 1,6-bisphosphate by ATP, the first committing step of glycolysis. This Bacillus subtilis (strain 168) protein is ATP-dependent 6-phosphofructokinase.